A 540-amino-acid polypeptide reads, in one-letter code: Putative cysteine ligase BshC (540 aa).

Residues 455–491 (GKENLKRLIRVVNSFEEKVKQRHRKNNQVAIQQLQKI) adopt a coiled-coil conformation.

Belongs to the BshC family.

Functionally, involved in bacillithiol (BSH) biosynthesis. May catalyze the last step of the pathway, the addition of cysteine to glucosamine malate (GlcN-Mal) to generate BSH. This is Putative cysteine ligase BshC from Desulforamulus reducens (strain ATCC BAA-1160 / DSM 100696 / MI-1) (Desulfotomaculum reducens).